Consider the following 289-residue polypeptide: Mas-related G-protein coupled receptor member G (289 aa).

Topologically, residues 1 to 13 (MFGLFGLWRTFDS) are extracellular. The helical transmembrane segment at 14-34 (VVFYLTLIVGLGGPVGNGLVL) threads the bilayer. The Cytoplasmic segment spans residues 35 to 42 (WNLGFRIK). Residues 43-63 (KGPFSIYLLHLAAADFLFLSC) traverse the membrane as a helical segment. At 64 to 78 (RVGFSVAQAALGAQD) the chain is on the extracellular side. A helical membrane pass occupies residues 79 to 99 (TLYFVLTFLWFAVGLWLLAAF). The Cytoplasmic portion of the chain corresponds to 100-120 (SVERCLSDLFPACYQGCRPRH). A helical membrane pass occupies residues 121-141 (ASAVLCALVWTPTLPAVPLPA). Over 142–163 (NACGLLRNSACPLVCPRYHVAS) the chain is Extracellular. The helical transmembrane segment at 164 to 184 (VTWFLVLARVAWTAGVVLFVW) threads the bilayer. Topologically, residues 185 to 195 (VTCCSTRPRPR) are cytoplasmic. Residues 196–216 (LYGIVLGALLLLFFCGLPSVF) traverse the membrane as a helical segment. The Extracellular segment spans residues 217–221 (YWSLQ). Residues 222–242 (PLLNFLLPVFSPLATLLACVN) form a helical membrane-spanning segment. Over 243-289 (SSSKPLIYSGLGRQPGKREPLRSVLRRALGEGAELGARGQSLPMGLL) the chain is Cytoplasmic.

It belongs to the G-protein coupled receptor 1 family. Mas subfamily.

It is found in the cell membrane. Orphan receptor. May regulate nociceptor function and/or development, including the sensation or modulation of pain. The sequence is that of Mas-related G-protein coupled receptor member G (MRGPRG) from Homo sapiens (Human).